The primary structure comprises 855 residues: DNA mismatch repair protein MutS (855 aa).

613-620 (GPNMGGKS) contacts ATP. The tract at residues 795–816 (ETTSLPHEVPSQQSGKPASPMQ) is disordered. Over residues 796–816 (TTSLPHEVPSQQSGKPASPMQ) the composition is skewed to polar residues.

It belongs to the DNA mismatch repair MutS family.

Functionally, this protein is involved in the repair of mismatches in DNA. It is possible that it carries out the mismatch recognition step. This protein has a weak ATPase activity. This is DNA mismatch repair protein MutS from Pseudomonas paraeruginosa (strain DSM 24068 / PA7) (Pseudomonas aeruginosa (strain PA7)).